We begin with the raw amino-acid sequence, 313 residues long: tRNA pseudouridine synthase B (313 aa).

D46 functions as the Nucleophile in the catalytic mechanism.

It belongs to the pseudouridine synthase TruB family. Type 1 subfamily.

The enzyme catalyses uridine(55) in tRNA = pseudouridine(55) in tRNA. In terms of biological role, responsible for synthesis of pseudouridine from uracil-55 in the psi GC loop of transfer RNAs. This Nitrosospira multiformis (strain ATCC 25196 / NCIMB 11849 / C 71) protein is tRNA pseudouridine synthase B.